The chain runs to 299 residues: Oxygen-dependent coproporphyrinogen-III oxidase (299 aa).

S92 provides a ligand contact to substrate. A divalent metal cation is bound by residues H96 and H106. Residue H106 is the Proton donor of the active site. 108–110 (NVR) is a substrate binding site. Residues H145 and H175 each coordinate a divalent metal cation. Residues 240-275 (YVEFNLVWDRGTLFGLQTGGRTESILMSMPPLVRWE) form an important for dimerization region. Residue 258 to 260 (GGR) coordinates substrate.

Belongs to the aerobic coproporphyrinogen-III oxidase family. In terms of assembly, homodimer. A divalent metal cation serves as cofactor.

It localises to the cytoplasm. It carries out the reaction coproporphyrinogen III + O2 + 2 H(+) = protoporphyrinogen IX + 2 CO2 + 2 H2O. It participates in porphyrin-containing compound metabolism; protoporphyrin-IX biosynthesis; protoporphyrinogen-IX from coproporphyrinogen-III (O2 route): step 1/1. In terms of biological role, involved in the heme biosynthesis. Catalyzes the aerobic oxidative decarboxylation of propionate groups of rings A and B of coproporphyrinogen-III to yield the vinyl groups in protoporphyrinogen-IX. This Salmonella arizonae (strain ATCC BAA-731 / CDC346-86 / RSK2980) protein is Oxygen-dependent coproporphyrinogen-III oxidase.